Reading from the N-terminus, the 268-residue chain is NH(3)-dependent NAD(+) synthetase (268 aa).

Residue 46–53 (GISGGQDS) coordinates ATP. Aspartate 52 is a Mg(2+) binding site. Arginine 140 provides a ligand contact to deamido-NAD(+). Threonine 160 is an ATP binding site. Residue glutamate 165 participates in Mg(2+) binding. Positions 173 and 180 each coordinate deamido-NAD(+). Residues lysine 189 and threonine 211 each contribute to the ATP site. 260 to 261 (HK) is a deamido-NAD(+) binding site.

The protein belongs to the NAD synthetase family. As to quaternary structure, homodimer.

The catalysed reaction is deamido-NAD(+) + NH4(+) + ATP = AMP + diphosphate + NAD(+) + H(+). Its pathway is cofactor biosynthesis; NAD(+) biosynthesis; NAD(+) from deamido-NAD(+) (ammonia route): step 1/1. Its function is as follows. Catalyzes the ATP-dependent amidation of deamido-NAD to form NAD. Uses ammonia as a nitrogen source. The protein is NH(3)-dependent NAD(+) synthetase of Buchnera aphidicola subsp. Schizaphis graminum (strain Sg).